We begin with the raw amino-acid sequence, 65 residues long: Large ribosomal subunit protein uL30 (65 aa).

Belongs to the universal ribosomal protein uL30 family. As to quaternary structure, part of the 50S ribosomal subunit.

The chain is Large ribosomal subunit protein uL30 from Onion yellows phytoplasma (strain OY-M).